A 291-amino-acid chain; its full sequence is Ribosome biogenesis protein BRX1 (291 aa).

Positions 31 to 232 (QRTLLISSRG…VILILEGSFG (202 aa)) constitute a Brix domain. Ser-285 is modified (phosphoserine).

The protein belongs to the BRX1 family. As to quaternary structure, part of a complex that includes BRX1, RPF1, RPF2 and SSF1 or SSF2.

It localises to the nucleus. The protein localises to the nucleolus. Functionally, required for biogenesis of the 60S ribosomal subunit. This is Ribosome biogenesis protein BRX1 (BRX1) from Saccharomyces cerevisiae (strain ATCC 204508 / S288c) (Baker's yeast).